Here is a 591-residue protein sequence, read N- to C-terminus: Pyruvate kinase 2 (591 aa).

Residue Arg-38 coordinates substrate. Positions 40, 42, and 72 each coordinate K(+). ATP is bound at residue 40–43; the sequence is NFSH. 2 residues coordinate ATP: Arg-79 and Lys-164. Residue Glu-229 coordinates Mg(2+). Substrate contacts are provided by Gly-252, Asp-253, and Thr-285. A Mg(2+)-binding site is contributed by Asp-253.

It belongs to the pyruvate kinase family. The protein in the C-terminal section; belongs to the PEP-utilizing enzyme family. Homotetramer. Mg(2+) is required as a cofactor. It depends on K(+) as a cofactor.

The catalysed reaction is pyruvate + ATP = phosphoenolpyruvate + ADP + H(+). Its pathway is carbohydrate degradation; glycolysis; pyruvate from D-glyceraldehyde 3-phosphate: step 5/5. This is Pyruvate kinase 2 (pyk2) from Synechocystis sp. (strain ATCC 27184 / PCC 6803 / Kazusa).